A 515-amino-acid chain; its full sequence is 1-pyrroline-5-carboxylate dehydrogenase (515 aa).

Catalysis depends on residues Glu286 and Cys320.

Belongs to the aldehyde dehydrogenase family. RocA subfamily.

It catalyses the reaction L-glutamate 5-semialdehyde + NAD(+) + H2O = L-glutamate + NADH + 2 H(+). It functions in the pathway amino-acid degradation; L-proline degradation into L-glutamate; L-glutamate from L-proline: step 2/2. This chain is 1-pyrroline-5-carboxylate dehydrogenase, found in Bacillus cereus (strain B4264).